Consider the following 407-residue polypeptide: MKRVFLIVLDSFGIGSSPDADKFNDVGSNTFGHIVEKCFLGEANVGRKGVLCIPNLVKLGIINAAKESTGQYPLGFNYSSNVIASYGFASEISSGKDTTSGHWEIAGVPVLDDWYYFKEKQNSFPESLLEKIIIRSELTGFIGNCHASGTDIISRLGEEHIQTKKPIVYTSSDSVFQIACHEEFFGLSNLYKLCKTVRFILDRYNYKVARVIARPFIGNDKLQFQRTGNRRDFSIKPFATTVIKKLIDEKQGQVIAIGKVSDIYGGIGISKNIKSTGLYELCSTTIHEMKKALNNTIVFTNLVDFDSNWGHRRDVSGYAKGLELFDSRLSEIISLVQKNDLLILTADHGCDPTWIGTDHTRENVPVLIYSPGIKKNFLGHRKTFADIGQTIAKYFLLTDMSYGQNML.

Mn(2+)-binding residues include Asp-10, Asp-306, His-311, Asp-347, His-348, and His-359.

It belongs to the phosphopentomutase family. Mn(2+) is required as a cofactor.

The protein resides in the cytoplasm. The enzyme catalyses 2-deoxy-alpha-D-ribose 1-phosphate = 2-deoxy-D-ribose 5-phosphate. It carries out the reaction alpha-D-ribose 1-phosphate = D-ribose 5-phosphate. It functions in the pathway carbohydrate degradation; 2-deoxy-D-ribose 1-phosphate degradation; D-glyceraldehyde 3-phosphate and acetaldehyde from 2-deoxy-alpha-D-ribose 1-phosphate: step 1/2. In terms of biological role, isomerase that catalyzes the conversion of deoxy-ribose 1-phosphate (dRib-1-P) and ribose 1-phosphate (Rib-1-P) to deoxy-ribose 5-phosphate (dRib-5-P) and ribose 5-phosphate (Rib-5-P), respectively. The protein is Phosphopentomutase of Buchnera aphidicola subsp. Acyrthosiphon pisum (strain APS) (Acyrthosiphon pisum symbiotic bacterium).